A 325-amino-acid polypeptide reads, in one-letter code: GTP 3',8-cyclase (325 aa).

Positions 1–226 constitute a Radical SAM core domain; the sequence is MNTVNYLRIS…EGACYGNGPA (226 aa). A GTP-binding site is contributed by Arg-8. 2 residues coordinate [4Fe-4S] cluster: Cys-15 and Cys-19. Tyr-21 is an S-adenosyl-L-methionine binding site. Cys-22 contributes to the [4Fe-4S] cluster binding site. GTP is bound at residue Arg-60. Gly-64 provides a ligand contact to S-adenosyl-L-methionine. Residue Ser-91 coordinates GTP. Residue Ser-115 participates in S-adenosyl-L-methionine binding. Position 152 (Lys-152) interacts with GTP. Met-186 lines the S-adenosyl-L-methionine pocket. [4Fe-4S] cluster is bound by residues Cys-249 and Cys-252. GTP is bound at residue 254-256; it reads RVR. [4Fe-4S] cluster is bound at residue Cys-266.

This sequence belongs to the radical SAM superfamily. MoaA family. In terms of assembly, monomer and homodimer. The cofactor is [4Fe-4S] cluster.

It carries out the reaction GTP + AH2 + S-adenosyl-L-methionine = (8S)-3',8-cyclo-7,8-dihydroguanosine 5'-triphosphate + 5'-deoxyadenosine + L-methionine + A + H(+). The protein operates within cofactor biosynthesis; molybdopterin biosynthesis. In terms of biological role, catalyzes the cyclization of GTP to (8S)-3',8-cyclo-7,8-dihydroguanosine 5'-triphosphate. This Gloeobacter violaceus (strain ATCC 29082 / PCC 7421) protein is GTP 3',8-cyclase.